Consider the following 184-residue polypeptide: Photosystem I assembly protein Ycf4 (184 aa).

2 helical membrane-spanning segments follow: residues 22 to 42 (FCWACILFLGSLGFLLVGTSS) and 57 to 77 (ILFFPQGIVMSFYGIAGLFIS).

This sequence belongs to the Ycf4 family.

The protein localises to the plastid. It is found in the chloroplast thylakoid membrane. Functionally, seems to be required for the assembly of the photosystem I complex. This Liriodendron tulipifera (Tuliptree) protein is Photosystem I assembly protein Ycf4.